Consider the following 339-residue polypeptide: Dihydroorotate dehydrogenase (quinone) (339 aa).

Residues 62–66 (AGLDK) and Thr86 contribute to the FMN site. A substrate-binding site is contributed by Lys66. Position 111–115 (111–115 (NRMGF)) interacts with substrate. FMN is bound by residues Asn139 and Asn172. Asn172 contacts substrate. Ser175 acts as the Nucleophile in catalysis. Asn177 lines the substrate pocket. 2 residues coordinate FMN: Lys217 and Thr245. Residue 246–247 (NT) coordinates substrate. Residues Gly268, Gly297, and 318-319 (YS) each bind FMN.

The protein belongs to the dihydroorotate dehydrogenase family. Type 2 subfamily. Monomer. FMN serves as cofactor.

The protein resides in the cell membrane. It carries out the reaction (S)-dihydroorotate + a quinone = orotate + a quinol. It participates in pyrimidine metabolism; UMP biosynthesis via de novo pathway; orotate from (S)-dihydroorotate (quinone route): step 1/1. In terms of biological role, catalyzes the conversion of dihydroorotate to orotate with quinone as electron acceptor. In Shewanella denitrificans (strain OS217 / ATCC BAA-1090 / DSM 15013), this protein is Dihydroorotate dehydrogenase (quinone).